The chain runs to 648 residues: Macrolide export ATP-binding/permease protein MacB (648 aa).

Residues 5–243 form the ABC transporter domain; sequence LELCNVSRSY…QGVDAAVVNT (239 aa). 41-48 contributes to the ATP binding site; that stretch reads GVSGSGKS. Transmembrane regions (helical) follow at residues 273-293, 417-437, 523-543, 577-597, and 611-631; these read LLTMLGIIIGIASVVSIVVVG, ANVVGEVVLVGNMPVIVIGVA, LFLTLVAVISLVVGGIGVMNI, VLVCLVGGALGISLSMFIAFM, and LTALASAFLCSTFTGILFGWL.

The protein belongs to the ABC transporter superfamily. Macrolide exporter (TC 3.A.1.122) family. In terms of assembly, homodimer. Part of the tripartite efflux system MacAB-TolC, which is composed of an inner membrane transporter, MacB, a periplasmic membrane fusion protein, MacA, and an outer membrane component, TolC. The complex forms a large protein conduit and can translocate molecules across both the inner and outer membranes. Interacts with MacA.

The protein resides in the cell inner membrane. Functionally, part of the tripartite efflux system MacAB-TolC. MacB is a non-canonical ABC transporter that contains transmembrane domains (TMD), which form a pore in the inner membrane, and an ATP-binding domain (NBD), which is responsible for energy generation. Confers resistance against macrolides. In Salmonella typhi, this protein is Macrolide export ATP-binding/permease protein MacB.